The chain runs to 36 residues: Photosystem I reaction center subunit VIII (36 aa).

The helical transmembrane segment at P7–Y29 threads the bilayer.

It belongs to the PsaI family.

Its subcellular location is the plastid. The protein resides in the chloroplast thylakoid membrane. Its function is as follows. May help in the organization of the PsaL subunit. The protein is Photosystem I reaction center subunit VIII of Anthoceros angustus (Hornwort).